The sequence spans 247 residues: 2,3-bisphosphoglycerate-dependent phosphoglycerate mutase (247 aa).

Substrate contacts are provided by residues 8–15 (RHGESTWN), 21–22 (TG), arginine 60, 87–90 (ERHY), lysine 98, 114–115 (RR), and 183–184 (GN). Histidine 9 (tele-phosphohistidine intermediate) is an active-site residue. Catalysis depends on glutamate 87, which acts as the Proton donor/acceptor.

Belongs to the phosphoglycerate mutase family. BPG-dependent PGAM subfamily. As to quaternary structure, homodimer.

The enzyme catalyses (2R)-2-phosphoglycerate = (2R)-3-phosphoglycerate. It functions in the pathway carbohydrate degradation; glycolysis; pyruvate from D-glyceraldehyde 3-phosphate: step 3/5. Its function is as follows. Catalyzes the interconversion of 2-phosphoglycerate and 3-phosphoglycerate. The sequence is that of 2,3-bisphosphoglycerate-dependent phosphoglycerate mutase from Leptothrix cholodnii (strain ATCC 51168 / LMG 8142 / SP-6) (Leptothrix discophora (strain SP-6)).